The following is an 831-amino-acid chain: Thymine dioxygenase JBP1-B (831 aa).

Residues 80-282 are thymine dioxygenase; sequence VVGGVLLPGA…RLTCVCYYRA (203 aa). Residues His207, Asp209, and His257 each coordinate Fe cation. A 2-oxoglutarate-binding site is contributed by Arg273. The tract at residues 409–578 is DNA-binding JBP1 domain; sequence LGGALKAAEE…IEEARRRGNA (170 aa).

The protein belongs to the TET family. JBP1 subfamily. In terms of assembly, monomer. Binds to DNA as a monomer. It depends on Fe(2+) as a cofactor.

It localises to the nucleus. It carries out the reaction thymine + 2-oxoglutarate + O2 = 5-hydroxymethyluracil + succinate + CO2. Its function is as follows. Dioxygenase that catalyzes the first step of DNA base J (beta-d-glucosyl-HOMedU) biosynthesis by converting thymine to 5-hydroxymethyluracil (HOMedU). DNA base J is a hypermodified thymidine residue found in the genome of kinetoplastid parasites, which is localized primarily to repetitive DNA, namely the telomeres, and is implicated in the regulation of antigenic variation. Also specifically binds to base J-containing DNA (J-DNA). Involved in propagation and maintenance of DNA base J synthesis initiated by JBP2 by specifically binding already synthesized DNA base J and propagating J synthesis. Thymine dioxygenase activity and J-DNA-binding are independent functions. In Trypanosoma cruzi (strain CL Brener), this protein is Thymine dioxygenase JBP1-B (JBP1B).